The following is a 449-amino-acid chain: Sensor protein QseC (449 aa).

At 1–12 (MKFTQRLSLRVR) the chain is on the cytoplasmic side. Residues 13–33 (LTLIFLILASVTWLLSSFVAW) traverse the membrane as a helical segment. Residues 34–156 (KQTTDNVDEL…QEWEYREDMA (123 aa)) are Periplasmic-facing. Residues 157 to 177 (LAIVAGQLIPWLVALPIMLII) traverse the membrane as a helical segment. At 178-449 (MMVLLGRELA…QGGFEAKVSW (272 aa)) the chain is on the cytoplasmic side. A Histidine kinase domain is found at 243–449 (DAAHELRSPL…QGGFEAKVSW (207 aa)). A Phosphohistidine; by autocatalysis modification is found at H246.

The protein resides in the cell inner membrane. The enzyme catalyses ATP + protein L-histidine = ADP + protein N-phospho-L-histidine.. Functionally, member of a two-component regulatory system QseB/QseC. Activates the flagella regulon by activating transcription of FlhDC. May activate QseB by phosphorylation. This chain is Sensor protein QseC (qseC), found in Escherichia coli (strain K12).